Here is a 426-residue protein sequence, read N- to C-terminus: Glutamate-1-semialdehyde 2,1-aminomutase (426 aa).

Lys-265 is subject to N6-(pyridoxal phosphate)lysine.

The protein belongs to the class-III pyridoxal-phosphate-dependent aminotransferase family. HemL subfamily. In terms of assembly, homodimer. Pyridoxal 5'-phosphate is required as a cofactor.

It localises to the cytoplasm. It carries out the reaction (S)-4-amino-5-oxopentanoate = 5-aminolevulinate. Its pathway is porphyrin-containing compound metabolism; protoporphyrin-IX biosynthesis; 5-aminolevulinate from L-glutamyl-tRNA(Glu): step 2/2. The sequence is that of Glutamate-1-semialdehyde 2,1-aminomutase from Salmonella enteritidis PT4 (strain P125109).